The chain runs to 492 residues: MTLWINGDWITGQGERRRKTNPVSAEILWQGNDANAAQVAEACQAARAAFPRWAREPFAARQAIVEKFAALLEAHKAELTEVIARETGKPRWEAATEVTAMINKIAISIKAYHARTGEQKSELVDGAATLRHRPHGVLAVFGPYNFPGHLPNGHIVPALLAGNTLIFKPSELTPWTGETVIKLWERAGLPAGVLNLVQGGRETGQALSSLDDLDGLLFTGSASTGYQLHRQLSGQPEKILALEMGGNNPLIIEDAANMDAAVHLTLQSAFITAGQRCTCARRLLVKQGAQGDAFLARLVDVAGRLQPGRWDDDPQPFIGGLISAQAAQHVMEAWRQREALGGRTLLVPRKVKEGTSLLTPGIIELTGVTDVPDEEVFGPLLNVWRYAHFDEAIRLANNTRFGLSCGLVSTDRAQFEQLLLEARAGIVNWNKPLTGAASTAPFGGVGASGNHRPSAWYAADYCAWPMASLESPELTLPATLSPGLDFSRREAV.

An NAD(+)-binding site is contributed by 220 to 225 (GSASTG). Catalysis depends on residues Glu-243 and Cys-277.

It belongs to the aldehyde dehydrogenase family. AstD subfamily.

The enzyme catalyses N-succinyl-L-glutamate 5-semialdehyde + NAD(+) + H2O = N-succinyl-L-glutamate + NADH + 2 H(+). Its pathway is amino-acid degradation; L-arginine degradation via AST pathway; L-glutamate and succinate from L-arginine: step 4/5. In terms of biological role, catalyzes the NAD-dependent reduction of succinylglutamate semialdehyde into succinylglutamate. The chain is N-succinylglutamate 5-semialdehyde dehydrogenase from Salmonella schwarzengrund (strain CVM19633).